Consider the following 106-residue polypeptide: Phosphoribosyl-ATP pyrophosphatase 1 (106 aa).

This sequence belongs to the PRA-PH family.

The protein resides in the cytoplasm. The enzyme catalyses 1-(5-phospho-beta-D-ribosyl)-ATP + H2O = 1-(5-phospho-beta-D-ribosyl)-5'-AMP + diphosphate + H(+). The protein operates within amino-acid biosynthesis; L-histidine biosynthesis; L-histidine from 5-phospho-alpha-D-ribose 1-diphosphate: step 2/9. This Bradyrhizobium diazoefficiens (strain JCM 10833 / BCRC 13528 / IAM 13628 / NBRC 14792 / USDA 110) protein is Phosphoribosyl-ATP pyrophosphatase 1 (hisE1).